A 504-amino-acid chain; its full sequence is Heat shock 70 kDa protein 14 (504 aa).

The protein belongs to the heat shock protein 70 family. In terms of assembly, component of ribosome-associated complex (RAC).

The protein localises to the cytoplasm. The protein resides in the cytosol. Component of the ribosome-associated complex (RAC), a complex involved in folding or maintaining nascent polypeptides in a folding-competent state. The chain is Heat shock 70 kDa protein 14 (hspa14) from Danio rerio (Zebrafish).